We begin with the raw amino-acid sequence, 154 residues long: Aspartate carbamoyltransferase regulatory chain (154 aa).

The Zn(2+) site is built by cysteine 110, cysteine 115, cysteine 136, and cysteine 139.

Belongs to the PyrI family. Contains catalytic and regulatory chains. It depends on Zn(2+) as a cofactor.

Involved in allosteric regulation of aspartate carbamoyltransferase. This is Aspartate carbamoyltransferase regulatory chain from Halobacterium salinarum (strain ATCC 700922 / JCM 11081 / NRC-1) (Halobacterium halobium).